Reading from the N-terminus, the 528-residue chain is ATP synthase F(1) complex catalytic subunit beta, mitochondrial (528 aa).

A mitochondrion-targeting transit peptide spans 1-46; the sequence is MLGLVGRVVAASASGALRGLSPSAPLPQAQLLLRAAPAALQPARDY. O-linked (GlcNAc) serine glycosylation occurs at S106. An N6-acetyllysine; alternate mark is found at K124 and K161. N6-succinyllysine; alternate occurs at positions 124 and 161. N6-acetyllysine is present on K198. Residues G209, V210, G211, K212, T213, and V214 each coordinate ADP. Residue G209 participates in ATP binding. Phosphate-binding residues include G209, V210, G211, K212, and T213. ATP-binding residues include G211, K212, T213, and V214. Residue T213 coordinates Mg(2+). A Mg(2+)-binding site is contributed by E238. Position 239 (R239) interacts with ATP. K259 and K264 each carry N6-acetyllysine; alternate. N6-succinyllysine; alternate is present on residues K259 and K264. At T312 the chain carries Phosphothreonine. S415 carries the post-translational modification Phosphoserine. An N6-acetyllysine modification is found at K426. The residue at position 433 (S433) is a Phosphoserine. An N6-acetyllysine mark is found at K480 and K485. At K522 the chain carries N6-acetyllysine; alternate. K522 carries the N6-succinyllysine; alternate modification.

It belongs to the ATPase alpha/beta chains family. In terms of assembly, homotrimer. Component of the ATP synthase complex composed at least of ATP5F1A/subunit alpha, ATP5F1B/subunit beta, ATP5MC1/subunit c (homooctomer), MT-ATP6/subunit a, MT-ATP8/subunit 8, ATP5ME/subunit e, ATP5MF/subunit f, ATP5MG/subunit g, ATP5MK/subunit k, ATP5MJ/subunit j, ATP5F1C/subunit gamma, ATP5F1D/subunit delta, ATP5F1E/subunit epsilon, ATP5PF/subunit F6, ATP5PB/subunit b, ATP5PD/subunit d, ATP5PO/subunit OSCP. ATP synthase complex consists of a soluble F(1) head domain (subunits alpha(3) and beta(3)) - the catalytic core - and a membrane F(0) domain - the membrane proton channel (subunits c, a, 8, e, f, g, k and j). These two domains are linked by a central stalk (subunits gamma, delta, and epsilon) rotating inside the F1 region and a stationary peripheral stalk (subunits F6, b, d, and OSCP). Interacts with PPIF. Interacts with BCL2L1 isoform BCL-X(L); the interaction mediates the association of BCL2L1 isoform BCL-X(L) with the mitochondrial membrane F(1)F(0) ATP synthase and enhances neurons metabolic efficiency. Interacts with CLN5 and PPT1. Interacts with S100A1; this interaction increases F1-ATPase activity. Interacts with MTLN. Interacts with TTC5/STRAP; the interaction results in decreased mitochondrial ATP production.

It is found in the mitochondrion inner membrane. The catalysed reaction is ATP + H2O + 4 H(+)(in) = ADP + phosphate + 5 H(+)(out). Its function is as follows. Catalytic subunit beta, of the mitochondrial membrane ATP synthase complex (F(1)F(0) ATP synthase or Complex V) that produces ATP from ADP in the presence of a proton gradient across the membrane which is generated by electron transport complexes of the respiratory chain. ATP synthase complex consist of a soluble F(1) head domain - the catalytic core - and a membrane F(1) domain - the membrane proton channel. These two domains are linked by a central stalk rotating inside the F(1) region and a stationary peripheral stalk. During catalysis, ATP synthesis in the catalytic domain of F(1) is coupled via a rotary mechanism of the central stalk subunits to proton translocation. In vivo, can only synthesize ATP although its ATP hydrolase activity can be activated artificially in vitro. With the subunit alpha (ATP5F1A), forms the catalytic core in the F(1) domain. The sequence is that of ATP synthase F(1) complex catalytic subunit beta, mitochondrial from Bos taurus (Bovine).